The chain runs to 148 residues: Ribonuclease pancreatic (148 aa).

An N-terminal signal peptide occupies residues 1–25 (MGLEKSLLLLPLLVLVLGCVQPSLG). Residues Lys-32 and Arg-35 each coordinate substrate. The active-site Proton acceptor is His-37. 4 disulfide bridges follow: Cys-50–Cys-108, Cys-64–Cys-119, Cys-82–Cys-134, and Cys-89–Cys-96. Residues 65–69 (KPVNT) and Lys-90 contribute to the substrate site. The active-site Proton donor is His-143.

Belongs to the pancreatic ribonuclease family. Monomer. Interacts with and forms tight 1:1 complexes with RNH1. Dimerization of two such complexes may occur. Interaction with RNH1 inhibits this protein. Pancreas.

The protein localises to the secreted. The catalysed reaction is an [RNA] containing cytidine + H2O = an [RNA]-3'-cytidine-3'-phosphate + a 5'-hydroxy-ribonucleotide-3'-[RNA].. The enzyme catalyses an [RNA] containing uridine + H2O = an [RNA]-3'-uridine-3'-phosphate + a 5'-hydroxy-ribonucleotide-3'-[RNA].. In terms of biological role, endonuclease that catalyzes the cleavage of RNA on the 3' side of pyrimidine nucleotides. Acts on single-stranded and double-stranded RNA. The polypeptide is Ribonuclease pancreatic (RNASE1) (Gerbillus nigeriae (Nigerian gerbil)).